A 124-amino-acid polypeptide reads, in one-letter code: uncharacterized protein (124 aa).

The signal sequence occupies residues 1–21 (MFLLSLLHFFHPSLIPSLSLS).

This is an uncharacterized protein from Schizosaccharomyces pombe (strain 972 / ATCC 24843) (Fission yeast).